A 434-amino-acid polypeptide reads, in one-letter code: 3-phosphoshikimate 1-carboxyvinyltransferase (434 aa).

3-phosphoshikimate-binding residues include Lys-22, Ser-23, and Arg-27. Lys-22 is a phosphoenolpyruvate binding site. Phosphoenolpyruvate-binding residues include Gly-94 and Arg-122. 3-phosphoshikimate-binding residues include Ser-169, Ser-170, Gln-171, Ser-199, Asp-320, and Lys-347. Gln-171 lines the phosphoenolpyruvate pocket. The active-site Proton acceptor is the Asp-320. 3 residues coordinate phosphoenolpyruvate: Arg-351, Arg-395, and Lys-420.

Belongs to the EPSP synthase family. Monomer.

The protein resides in the cytoplasm. It carries out the reaction 3-phosphoshikimate + phosphoenolpyruvate = 5-O-(1-carboxyvinyl)-3-phosphoshikimate + phosphate. Its pathway is metabolic intermediate biosynthesis; chorismate biosynthesis; chorismate from D-erythrose 4-phosphate and phosphoenolpyruvate: step 6/7. Functionally, catalyzes the transfer of the enolpyruvyl moiety of phosphoenolpyruvate (PEP) to the 5-hydroxyl of shikimate-3-phosphate (S3P) to produce enolpyruvyl shikimate-3-phosphate and inorganic phosphate. The polypeptide is 3-phosphoshikimate 1-carboxyvinyltransferase (Ralstonia pickettii (strain 12J)).